A 533-amino-acid chain; its full sequence is D-3-phosphoglycerate dehydrogenase (533 aa).

Ala-2 is modified (N-acetylalanine). Ser-14 carries the post-translational modification Phosphoserine. The residue at position 21 (Lys-21) is an N6-acetyllysine; alternate. Lys-21 participates in a covalent cross-link: Glycyl lysine isopeptide (Lys-Gly) (interchain with G-Cter in SUMO1); alternate. Lys-21 is covalently cross-linked (Glycyl lysine isopeptide (Lys-Gly) (interchain with G-Cter in SUMO2); alternate). The residue at position 58 (Lys-58) is an N6-acetyllysine. NAD(+)-binding positions include Thr-78, 155–156 (RI), Asp-175, Thr-207, 234–236 (CAR), and Asp-260. Thr-78 is subject to Phosphothreonine. Arg-236 is a catalytic residue. The active site involves Glu-265. His-283 (proton donor) is an active-site residue. 283–286 (HLGA) contacts NAD(+).

Belongs to the D-isomer specific 2-hydroxyacid dehydrogenase family. Homotetramer.

It catalyses the reaction (2R)-3-phosphoglycerate + NAD(+) = 3-phosphooxypyruvate + NADH + H(+). It carries out the reaction (R)-2-hydroxyglutarate + NAD(+) = 2-oxoglutarate + NADH + H(+). The enzyme catalyses (S)-malate + NAD(+) = oxaloacetate + NADH + H(+). Its pathway is amino-acid biosynthesis; L-serine biosynthesis; L-serine from 3-phospho-D-glycerate: step 1/3. Its function is as follows. Catalyzes the reversible oxidation of 3-phospho-D-glycerate to 3-phosphonooxypyruvate, the first step of the phosphorylated L-serine biosynthesis pathway. Also catalyzes the reversible oxidation of 2-hydroxyglutarate to 2-oxoglutarate and the reversible oxidation of (S)-malate to oxaloacetate. The sequence is that of D-3-phosphoglycerate dehydrogenase (PHGDH) from Homo sapiens (Human).